The chain runs to 334 residues: Ornithine carbamoyltransferase (334 aa).

Carbamoyl phosphate-binding positions include 57-60, Gln-84, Arg-108, and 135-138; these read STRT and HPTQ. Residues Asn-169, Asp-233, and 237-238 contribute to the L-ornithine site; that span reads SM. Carbamoyl phosphate-binding positions include 275–276 and Arg-320; that span reads CL.

Belongs to the aspartate/ornithine carbamoyltransferase superfamily. OTCase family.

The protein localises to the cytoplasm. It carries out the reaction carbamoyl phosphate + L-ornithine = L-citrulline + phosphate + H(+). It participates in amino-acid biosynthesis; L-arginine biosynthesis; L-arginine from L-ornithine and carbamoyl phosphate: step 1/3. Reversibly catalyzes the transfer of the carbamoyl group from carbamoyl phosphate (CP) to the N(epsilon) atom of ornithine (ORN) to produce L-citrulline. The sequence is that of Ornithine carbamoyltransferase from Vibrio vulnificus (strain YJ016).